Here is a 647-residue protein sequence, read N- to C-terminus: Chaperone protein DnaK (647 aa).

At threonine 199 the chain carries Phosphothreonine; by autocatalysis. The disordered stretch occupies residues 602-647; that stretch reads MYAQEQAQAGQQAGPGAGSASAGQSGEKPVEGEVVDAEFEEVKDKK. Residues 604–627 show a composition bias toward low complexity; it reads AQEQAQAGQQAGPGAGSASAGQSG.

It belongs to the heat shock protein 70 family.

In terms of biological role, acts as a chaperone. The chain is Chaperone protein DnaK from Nitrosomonas eutropha (strain DSM 101675 / C91 / Nm57).